The following is a 480-amino-acid chain: Ammonium transporter 2 member 4 (480 aa).

Residues 1-27 (MELPSNLLPDEASPEWMNKGDNAWQLT) are Extracellular-facing. Residues 28–48 (AATMVGLQSIPGLVILYGSLV) form a helical membrane-spanning segment. Topologically, residues 49–51 (KKT) are cytoplasmic. Residues 52 to 72 (WAINSAFMAFYAFASVLLCWV) traverse the membrane as a helical segment. Topologically, residues 73–113 (SWAYQMSFGEKMVFFLGKPNVALDEKFLLGKAFLGNFPNAT) are extracellular. The N-linked (GlcNAc...) asparagine glycan is linked to Asn111. Residues 114-134 (MVFYQGVFAGLTLILIAGALL) form a helical membrane-spanning segment. Topologically, residues 135–141 (GRMNIRA) are cytoplasmic. The chain crosses the membrane as a helical span at residues 142–162 (WMLFVPLWVTFSYTVVAFSIW). The Extracellular segment spans residues 163–175 (CPDGWLAKRGVID). A helical transmembrane segment spans residues 176–196 (FAGGYVIHLSAGVAGFTAAYW). Residues 197-214 (VGPRADKDRETFPAATNN) are Cytoplasmic-facing. The chain crosses the membrane as a helical span at residues 215–235 (MIMVLAGAGLLWMGWSGFNGG). The Extracellular portion of the chain corresponds to 236 to 242 (APFVAST). The chain crosses the membrane as a helical span at residues 243-263 (IASLAILNTHVCTAASITVWV). Residues 264–274 (MLDTFYFGKPT) lie on the Cytoplasmic side of the membrane. The chain crosses the membrane as a helical span at residues 275–295 (VFGAVQGMITGLVCITPAAGV). Topologically, residues 296 to 298 (VQG) are extracellular. A helical membrane pass occupies residues 299–319 (WAAILMGFISGSIPWYTMMVL). The Cytoplasmic portion of the chain corresponds to 320 to 334 (HNKVNFLKKIDDPMA). The helical transmembrane segment at 335–355 (VFHTHAIAGALGGILTGFFAV) threads the bilayer. Residues 356-394 (PKLCRLFYMVPDWEKYIGLAYGLQNKGATQAGLKQMVIQ) lie on the Extracellular side of the membrane. Residues 395 to 415 (IEAIVFVICYNVLMTSLICLI) form a helical membrane-spanning segment. Over 416-480 (VRVIVPLRLN…SRSLGELQMV (65 aa)) the chain is Cytoplasmic.

Belongs to the ammonia transporter channel (TC 1.A.11.2) family.

The protein localises to the cell membrane. Involved in ammonium transport. May be involved in arbuscular mycorrhizal (AM) symbiosis with AM fungi. The polypeptide is Ammonium transporter 2 member 4 (Medicago truncatula (Barrel medic)).